The chain runs to 305 residues: tRNA uridine(34) hydroxylase (305 aa).

The Rhodanese domain occupies 125-219 (ADENTVVVDK…YLEEVPREQS (95 aa)). The active-site Cysteine persulfide intermediate is cysteine 179.

This sequence belongs to the TrhO family.

The enzyme catalyses uridine(34) in tRNA + AH2 + O2 = 5-hydroxyuridine(34) in tRNA + A + H2O. Functionally, catalyzes oxygen-dependent 5-hydroxyuridine (ho5U) modification at position 34 in tRNAs. The sequence is that of tRNA uridine(34) hydroxylase from Brucella abortus (strain S19).